The chain runs to 1127 residues: Collagen alpha-2(I) chain (1127 aa).

The span at 1 to 16 (DGKPGLPGPAGPPGPP) shows a compositional bias: pro residues. The disordered stretch occupies residues 1–1017 (DGKPGLPGPA…GPAGPAGGGY (1017 aa)). Low complexity-rich tracts occupy residues 171–191 (AGPAGPAGARGPAGPLGAAGP), 221–230 (EPGPNGAVGP), and 237–258 (PGNNGLNGAKGAAGTPGVAGAP). Residues 260–270 (FPGPRGGPGPQ) are compositionally biased toward pro residues. The span at 272-282 (PQGAAGQRGLA) shows a compositional bias: low complexity. Positions 289-298 (GVKGDGGPKG) are enriched in gly residues. 4 stretches are compositionally biased toward low complexity: residues 326–345 (ATGPAGNRGARGAPGSRGMP), 355–398 (AAGP…AGPA), 436–449 (APGPDGNNGATGAT), and 461–473 (QGAAGAPGFQGLP). Over residues 474-483 (GPAGGAGEAG) the composition is skewed to gly residues. Residues 508-518 (NPGAAGASGPQ) show a composition bias toward low complexity. Gly residues predominate over residues 531-568 (GTDGGKGEPGAAGAAGGPGHQGPGGMPGERGAAGGPGG). Residues 569 to 580 (KGEKGEAGHRGP) show a composition bias toward basic and acidic residues. Low complexity-rich tracts occupy residues 611–625 (SGSFGPAGPAGARGA) and 634–647 (PAGAPGFAGPPGAD). The segment covering 657–666 (GPSGGKGESG) has biased composition (gly residues). 3 stretches are compositionally biased toward low complexity: residues 667 to 692 (PSGPAGPAGQSGPPGASGPAGPTGAR), 703 to 730 (FPGAAGRVGAAGPAGLVGPPGSAGPAGK), and 758 to 778 (SGEKGPSGEPGTPGTSGPLGL). Residues 792–801 (GSPGGAGAVG) show a composition bias toward gly residues. Composition is skewed to low complexity over residues 802–824 (EAGRVGPAGPAGARGAPGNLGLP) and 860–872 (PGSSGAMGLAGAP). The span at 876 to 897 (GPSGGAGRPGNRGESGPGGAAG) shows a compositional bias: gly residues. A compositionally biased stretch (low complexity) spans 898 to 913 (AVGPAGARGAAGPSGP). Residues 914-928 (RGEKGVAGEKGERGM) are compositionally biased toward basic and acidic residues. Low complexity-rich tracts occupy residues 937–956 (LQGMPGPSGPSGDTGSAGPN) and 986–997 (PGARGPPGYVGP). The segment covering 998–1010 (AGPPGXPGLPGPA) has biased composition (pro residues). A Fibrillar collagen NC1 domain is found at 1093–1127 (RTNKPSRLPLLDLAPLDLGGADQEFGLDLGPVCFK).

It belongs to the fibrillar collagen family.

The protein localises to the secreted. It is found in the extracellular space. It localises to the extracellular matrix. The protein is Collagen alpha-2(I) chain of Epinephelus marginatus (Dusky grouper).